The following is a 353-amino-acid chain: MKFIDEATIKVYAGDGGNGVATFRREKYEAMGGPNGGDGGRGGSIYMIADRNINTLVDYRYTRVFRAQRGENGRGSDQYGASGEDMVLRVPVGTVVSDKATGQVLTDLAEHGQKVMVAKGGKGGLGNIHFKSSVNRAPRQCTKGDPGEEFELYLELKVLADVGLLGMPNAGKSTFIRSVSAAKPKVADYPFTTLHPNLGVVRVDANRSFVIADVPGLIEGAAEGAGLGHQFLRHLSRTRLLLHLVDLAPFDESVDPVREALAITEELRKYDEALYNKPRWLVLNKVDMLEDSEQKVAEFVQRLGWQGRYFAISALAGIGCRELTYAIMEHVEEASRVEHEAAENTGAASMSGD.

Positions 1 to 159 constitute an Obg domain; the sequence is MKFIDEATIK…FELYLELKVL (159 aa). Residues 160 to 332 form the OBG-type G domain; the sequence is ADVGLLGMPN…LTYAIMEHVE (173 aa). GTP contacts are provided by residues 166-173, 191-195, 213-216, 284-287, and 313-315; these read GMPNAGKS, FTTLH, DVPG, NKVD, and SAL. Positions 173 and 193 each coordinate Mg(2+).

This sequence belongs to the TRAFAC class OBG-HflX-like GTPase superfamily. OBG GTPase family. As to quaternary structure, monomer. It depends on Mg(2+) as a cofactor.

It localises to the cytoplasm. An essential GTPase which binds GTP, GDP and possibly (p)ppGpp with moderate affinity, with high nucleotide exchange rates and a fairly low GTP hydrolysis rate. Plays a role in control of the cell cycle, stress response, ribosome biogenesis and in those bacteria that undergo differentiation, in morphogenesis control. The polypeptide is GTPase Obg (Methylobacillus flagellatus (strain ATCC 51484 / DSM 6875 / VKM B-1610 / KT)).